A 472-amino-acid chain; its full sequence is Na(+)/H(+) antiporter NhaA (472 aa).

Transmembrane regions (helical) follow at residues 24–44 (ISGL…NLPA), 66–86 (LPIG…TVGL), 108–128 (LCAV…TALF), 156–176 (GWAV…ALFA), 196–216 (LLAI…YWFI), 234–254 (VPWI…FEAG), 290–310 (PFSA…VHFE), 312–332 (MSPL…LVVG), 361–381 (MIPA…IASL), and 392–412 (ARFG…VLLS). The disordered stretch occupies residues 422 to 472 (AAAAAADEEDDESIDGDGIGQPSHTTEPTTPTEHPGTLADGTASVEIDFRH). The span at 427–436 (ADEEDDESID) shows a compositional bias: acidic residues. Low complexity predominate over residues 445–456 (HTTEPTTPTEHP).

This sequence belongs to the NhaA Na(+)/H(+) (TC 2.A.33) antiporter family.

Its subcellular location is the cell membrane. The enzyme catalyses Na(+)(in) + 2 H(+)(out) = Na(+)(out) + 2 H(+)(in). In terms of biological role, na(+)/H(+) antiporter that extrudes sodium in exchange for external protons. The sequence is that of Na(+)/H(+) antiporter NhaA from Bifidobacterium longum (strain NCC 2705).